A 261-amino-acid polypeptide reads, in one-letter code: Cytochrome c oxidase subunit 3 (261 aa).

Residues 1-15 (MTHQTHAYHMVNPSP) lie on the Mitochondrial matrix side of the membrane. Residues 16-33 (WPLTGAFSALLLTSGLVM) form a helical membrane-spanning segment. The Mitochondrial intermembrane portion of the chain corresponds to 34-38 (WFHYN). A helical transmembrane segment spans residues 39–62 (SITLLTLGLLTNILTMYQWWRDVI). At 63 to 77 (REGTYQGHHTPIVQK) the chain is on the mitochondrial matrix side. Residues 78 to 99 (GLRYGMILFIVSEVFFFAGFFW) traverse the membrane as a helical segment. The Mitochondrial intermembrane segment spans residues 100 to 129 (AFYHSSLVPTHDLGGCWPPTGISPLNPLEV). The chain crosses the membrane as a helical span at residues 130-150 (PLLNTSVLLASGVSITWAHHS). At 151-156 (LMEGKR) the chain is on the mitochondrial matrix side. A helical transmembrane segment spans residues 157–178 (NHMNQALLITIMLGLYFTILQA). Topologically, residues 179–198 (SEYFETSFSISDGIYGSTFF) are mitochondrial intermembrane. The helical transmembrane segment at 199-224 (MATGFHGLHVIIGSTFLIVCLLRQLK) threads the bilayer. The Mitochondrial matrix portion of the chain corresponds to 225–232 (FHFTSKHH). The helical transmembrane segment at 233 to 255 (FGFEAAAWYWHFVDVVWLFLYVS) threads the bilayer. Over 256–261 (IYWWGS) the chain is Mitochondrial intermembrane.

It belongs to the cytochrome c oxidase subunit 3 family. Component of the cytochrome c oxidase (complex IV, CIV), a multisubunit enzyme composed of 14 subunits. The complex is composed of a catalytic core of 3 subunits MT-CO1, MT-CO2 and MT-CO3, encoded in the mitochondrial DNA, and 11 supernumerary subunits COX4I, COX5A, COX5B, COX6A, COX6B, COX6C, COX7A, COX7B, COX7C, COX8 and NDUFA4, which are encoded in the nuclear genome. The complex exists as a monomer or a dimer and forms supercomplexes (SCs) in the inner mitochondrial membrane with NADH-ubiquinone oxidoreductase (complex I, CI) and ubiquinol-cytochrome c oxidoreductase (cytochrome b-c1 complex, complex III, CIII), resulting in different assemblies (supercomplex SCI(1)III(2)IV(1) and megacomplex MCI(2)III(2)IV(2)).

It is found in the mitochondrion inner membrane. The catalysed reaction is 4 Fe(II)-[cytochrome c] + O2 + 8 H(+)(in) = 4 Fe(III)-[cytochrome c] + 2 H2O + 4 H(+)(out). Component of the cytochrome c oxidase, the last enzyme in the mitochondrial electron transport chain which drives oxidative phosphorylation. The respiratory chain contains 3 multisubunit complexes succinate dehydrogenase (complex II, CII), ubiquinol-cytochrome c oxidoreductase (cytochrome b-c1 complex, complex III, CIII) and cytochrome c oxidase (complex IV, CIV), that cooperate to transfer electrons derived from NADH and succinate to molecular oxygen, creating an electrochemical gradient over the inner membrane that drives transmembrane transport and the ATP synthase. Cytochrome c oxidase is the component of the respiratory chain that catalyzes the reduction of oxygen to water. Electrons originating from reduced cytochrome c in the intermembrane space (IMS) are transferred via the dinuclear copper A center (CU(A)) of subunit 2 and heme A of subunit 1 to the active site in subunit 1, a binuclear center (BNC) formed by heme A3 and copper B (CU(B)). The BNC reduces molecular oxygen to 2 water molecules using 4 electrons from cytochrome c in the IMS and 4 protons from the mitochondrial matrix. The protein is Cytochrome c oxidase subunit 3 (mt-Co3) of Mus musculus (Mouse).